We begin with the raw amino-acid sequence, 539 residues long: MGKLLLWVGLLLMLKHHDGAAHKLVCYFTNWAFSRPGSASILPRDLDPFLCTHLVFAFASMNNNQIVPKDPLDEKILYPEFNKLKERNRGLKTLLSVGGWNFGTSRFTKMLSTFSNRERFVKSVIALLRTHGFDGLDLFFLYPGLRGSPARDRWTFVFLLEELLQAFKNEAQLTMRPRLLLSAAVSGDPHVIQKAYDARLLGRLLDFISVLSYDLHGSWEKVTGHNSPLFSLPGDPKSSAYAMSYWRQLGVPPEKLLMGLPTYGRTFHLLRASQNELGAGAAGPASPGKYTKQAGFLAYYEVCSFVQRAKKRWINDQYVPYAFKGKEWVGYDDAISFGYKAFFIKREHFGGAMVWTLDLDDFRGNFCGTGPFPLAHTLNNLLVNDEFSSTPSPKFWFSTAVNSSRIGPEMPTMTRDLTTGLGILPLGGEAVATETHRKSATMTTTPRGETATPTRTPLSSGRRTAAPEGKTESPGEKPLTSVGRLAVSPGGIAVGPVHLQIGQKVTPPGRKAGVPEKVTIPSGKMTVTPDGRAETLERL.

Positions 1–21 are cleaved as a signal peptide; the sequence is MGKLLLWVGLLLMLKHHDGAA. The GH18 domain occupies 22 to 385; the sequence is HKLVCYFTNW…HTLNNLLVND (364 aa). Cys-26 and Cys-51 form a disulfide bridge. Chitin is bound by residues 71–72, 98–101, Tyr-142, 211–214, and Trp-355; these read PL, GGWN, and LSYD. N-linked (GlcNAc...) asparagine glycosylation is present at Asn-402. Disordered stretches follow at residues 433-480 and 503-539; these read TETH…KPLT and QKVT…LERL. Over residues 440–457 the composition is skewed to low complexity; that stretch reads ATMTTTPRGETATPTRTP.

The protein belongs to the glycosyl hydrolase 18 family. In terms of tissue distribution, oviduct.

Its subcellular location is the cytoplasmic vesicle. The protein resides in the secretory vesicle. Binds to oocyte zona pellucida in vivo. May play a role in the fertilization process and/or early embryonic development. The sequence is that of Oviduct-specific glycoprotein (OVGP1) from Ovis aries (Sheep).